A 142-amino-acid chain; its full sequence is Hemoglobin subunit alpha-1 (142 aa).

The region spanning 2-142 (VLSAADKSNV…VSTVLTSKYR (141 aa)) is the Globin domain. Histidine 59 contributes to the O2 binding site. Heme b is bound at residue histidine 88.

Belongs to the globin family. In terms of assembly, heterotetramer of two alpha chains and two beta chains.

Its function is as follows. Involved in oxygen transport from the lung to the various peripheral tissues. Functionally, hemopressin acts as an antagonist peptide of the cannabinoid receptor CNR1. Hemopressin-binding efficiently blocks cannabinoid receptor CNR1 and subsequent signaling. The polypeptide is Hemoglobin subunit alpha-1 (HBA1) (Capra hircus (Goat)).